Consider the following 469-residue polypeptide: ATP synthase subunit beta (469 aa).

155–162 contacts ATP; the sequence is GGAGVGKT.

The protein belongs to the ATPase alpha/beta chains family. F-type ATPases have 2 components, CF(1) - the catalytic core - and CF(0) - the membrane proton channel. CF(1) has five subunits: alpha(3), beta(3), gamma(1), delta(1), epsilon(1). CF(0) has three main subunits: a(1), b(2) and c(9-12). The alpha and beta chains form an alternating ring which encloses part of the gamma chain. CF(1) is attached to CF(0) by a central stalk formed by the gamma and epsilon chains, while a peripheral stalk is formed by the delta and b chains.

It is found in the cell inner membrane. The enzyme catalyses ATP + H2O + 4 H(+)(in) = ADP + phosphate + 5 H(+)(out). Functionally, produces ATP from ADP in the presence of a proton gradient across the membrane. The catalytic sites are hosted primarily by the beta subunits. This Helicobacter pylori (strain ATCC 700392 / 26695) (Campylobacter pylori) protein is ATP synthase subunit beta.